The primary structure comprises 510 residues: Probable RNA-binding protein 46 (510 aa).

Residues 23–42 form a disordered region; that stretch reads ENGQRKFGGPPPGWEGPPPP. Positions 31–42 are enriched in pro residues; sequence GPPPGWEGPPPP. RRM domains are found at residues 45–123, 125–207, and 220–292; these read REVF…VSLD, CRLF…WAEP, and RVLY…LAKP.

Expressed in the testis and ovary.

It is found in the cytoplasm. Its function is as follows. Essential for male and female fertility, playing a crucial role in regulating germ cell development by ensuring the proper progression of meiosis prophase I. This Danio rerio (Zebrafish) protein is Probable RNA-binding protein 46 (rbm46).